A 162-amino-acid polypeptide reads, in one-letter code: Phosphopantetheine adenylyltransferase (162 aa).

Substrate is bound at residue Thr10. ATP-binding positions include 10–11 (TF) and His18. Positions 42, 74, and 88 each coordinate substrate. Residues 89-91 (GLR), Glu99, and 124-130 (NSFISST) contribute to the ATP site.

It belongs to the bacterial CoaD family. In terms of assembly, homohexamer. Mg(2+) is required as a cofactor.

Its subcellular location is the cytoplasm. The catalysed reaction is (R)-4'-phosphopantetheine + ATP + H(+) = 3'-dephospho-CoA + diphosphate. Its pathway is cofactor biosynthesis; coenzyme A biosynthesis; CoA from (R)-pantothenate: step 4/5. In terms of biological role, reversibly transfers an adenylyl group from ATP to 4'-phosphopantetheine, yielding dephospho-CoA (dPCoA) and pyrophosphate. This chain is Phosphopantetheine adenylyltransferase, found in Alteromonas mediterranea (strain DSM 17117 / CIP 110805 / LMG 28347 / Deep ecotype).